The sequence spans 67 residues: DNA-directed RNA polymerase subunit omega (67 aa).

It belongs to the RNA polymerase subunit omega family. The RNAP catalytic core consists of 2 alpha, 1 beta, 1 beta' and 1 omega subunit. When a sigma factor is associated with the core the holoenzyme is formed, which can initiate transcription.

The enzyme catalyses RNA(n) + a ribonucleoside 5'-triphosphate = RNA(n+1) + diphosphate. Its function is as follows. Promotes RNA polymerase assembly. Latches the N- and C-terminal regions of the beta' subunit thereby facilitating its interaction with the beta and alpha subunits. In Burkholderia ambifaria (strain ATCC BAA-244 / DSM 16087 / CCUG 44356 / LMG 19182 / AMMD) (Burkholderia cepacia (strain AMMD)), this protein is DNA-directed RNA polymerase subunit omega.